Consider the following 193-residue polypeptide: Activity-regulated cytoskeleton associated protein 2 (193 aa).

The protein belongs to the ARC/ARG3.1 family. As to quaternary structure, homooligomer; homooligomerizes into virion-like capsids.

It is found in the extracellular vesicle membrane. Functionally, self-assembles into virion-like capsids that encapsulate RNAs and mediate intercellular RNA transfer. Arc2 protein is released from cells in extracellular vesicles that mediate the transfer of mRNA into neighboring cells. In Drosophila melanogaster (Fruit fly), this protein is Activity-regulated cytoskeleton associated protein 2.